The following is a 113-amino-acid chain: Venom protein 184 (113 aa).

An N-terminal signal peptide occupies residues 1–21 (MKTTLIFCILGIVIPTAVVSS).

Contains 3 disulfide bonds. As to expression, expressed by the venom gland.

The protein resides in the secreted. The chain is Venom protein 184 from Lychas mucronatus (Chinese swimming scorpion).